A 221-amino-acid chain; its full sequence is Lipoprotein-releasing system ATP-binding protein LolD (221 aa).

One can recognise an ABC transporter domain in the interval 6-220 (LTLKNVSKHY…YKLKHGALNM (215 aa)). Position 42–49 (42–49 (GSSGSGKS)) interacts with ATP.

It belongs to the ABC transporter superfamily. Lipoprotein translocase (TC 3.A.1.125) family. In terms of assembly, the complex is composed of two ATP-binding proteins (LolD) and two transmembrane proteins (LolC and LolE).

The protein localises to the cell inner membrane. Functionally, part of the ABC transporter complex LolCDE involved in the translocation of mature outer membrane-directed lipoproteins, from the inner membrane to the periplasmic chaperone, LolA. Responsible for the formation of the LolA-lipoprotein complex in an ATP-dependent manner. This is Lipoprotein-releasing system ATP-binding protein LolD from Rickettsia bellii (strain RML369-C).